Reading from the N-terminus, the 230-residue chain is 3-beta-hydroxysteroid-Delta(8),Delta(7)-isomerase (230 aa).

Thr2 carries the N-acetylthreonine modification. The next 4 helical transmembrane spans lie at 29–49 (WHIL…TWLL), 66–86 (LCWF…FVLY), 121–141 (METI…IAFL), and 185–205 (FWFY…VLVL). The EXPERA domain occupies 61-204 (WRRLSLCWFA…LWLVLPGVLV (144 aa)).

The protein belongs to the EBP family.

It localises to the endoplasmic reticulum membrane. The protein resides in the nucleus envelope. It is found in the cytoplasmic vesicle. The enzyme catalyses lathosterol = 5alpha-cholest-8-en-3beta-ol. The catalysed reaction is zymosterol = 5alpha-cholesta-7,24-dien-3beta-ol. It catalyses the reaction 5,6alpha-epoxy-5alpha-cholestan-3beta-ol + H2O = 5alpha-cholestane-3beta,5,6beta-triol. It carries out the reaction 5,6beta-epoxy-5beta-cholestan-3beta-ol + H2O = 5alpha-cholestane-3beta,5,6beta-triol. It functions in the pathway steroid biosynthesis; cholesterol biosynthesis. Its activity is regulated as follows. Cholestenol Delta-isomerase and cholesterol-5,6-epoxide hydrolase (ChEH) activities are inhibited by tamoxifen and the selective AEBS ligand (4-benzyl-phenoxy)-ethyl-N-pyrrolidine (PBPE). ChEH activity is inhibited by oleic acid. Its function is as follows. Isomerase that catalyzes the conversion of Delta(8)-sterols to their corresponding Delta(7)-isomers a catalytic step in the postlanosterol biosynthesis of cholesterol. In terms of biological role, component of the microsomal antiestrogen binding site (AEBS), a multiproteic complex at the ER membrane that consists of an association between EBP and 7-dehydrocholesterol reductase/DHCR7. This complex is responsible for cholesterol-5,6-epoxide hydrolase (ChEH) activity, which consists in the hydration of cholesterol-5,6-epoxides (5,6-EC) into cholestane-3beta,5alpha,6beta-triol (CT). The precise role of each component of this complex has not been described yet. The polypeptide is 3-beta-hydroxysteroid-Delta(8),Delta(7)-isomerase (Homo sapiens (Human)).